The primary structure comprises 630 residues: Protein zwilch homolog (630 aa).

The protein belongs to the ZWILCH family. As to quaternary structure, component of the RZZ complex composed of rod-1, czw-1 and zwl-1. Interacts with the spindly-like protein spdl-1. Interacts with NDC80 complex component ndc-80.

Its subcellular location is the cytoplasm. The protein localises to the cell cortex. It localises to the chromosome. The protein resides in the centromere. It is found in the kinetochore. Its subcellular location is the cytoskeleton. The protein localises to the spindle. Functionally, essential component of the mitotic checkpoint, which prevents cells from prematurely exiting mitosis. Required for chromosome segregation, the assembly of the dynein-dynactin and mdf-1-mdf-2 complexes onto kinetochores and spindle pole separation. Its function related to the spindle assembly machinery and kinetochore-microtubule attachments likely depends on its association in the mitotic RZZ complex. The RZZ complex recruits the spindly-like protein spdl-1 to kinetochores. To prevent irregular chromosome segregation, the complex also inhibits the attachment of the kinetochore-associated NDC80 complex to microtubules. The recruitment of spdl-1 to kinetochores relieves this inhibition. Required for embryonic development. The sequence is that of Protein zwilch homolog (zwl-1) from Caenorhabditis elegans.